A 31-amino-acid polypeptide reads, in one-letter code: Scolopendra 20566.01 Da toxin (31 aa).

This sequence belongs to the CRISP family. Venom allergen 5-like subfamily. In terms of processing, contains 3 disulfide bonds. Expressed by the venom gland.

It localises to the secreted. The polypeptide is Scolopendra 20566.01 Da toxin (Scolopendra angulata (Barbados giant red centipede)).